The sequence spans 182 residues: Large ribosomal subunit protein uL10 (182 aa).

Belongs to the universal ribosomal protein uL10 family. As to quaternary structure, part of the ribosomal stalk of the 50S ribosomal subunit. The N-terminus interacts with L11 and the large rRNA to form the base of the stalk. The C-terminus forms an elongated spine to which L12 dimers bind in a sequential fashion forming a multimeric L10(L12)X complex.

Functionally, forms part of the ribosomal stalk, playing a central role in the interaction of the ribosome with GTP-bound translation factors. The polypeptide is Large ribosomal subunit protein uL10 (Janthinobacterium sp. (strain Marseille) (Minibacterium massiliensis)).